Reading from the N-terminus, the 571-residue chain is Proline--tRNA ligase (571 aa).

This sequence belongs to the class-II aminoacyl-tRNA synthetase family. ProS type 1 subfamily. As to quaternary structure, homodimer.

Its subcellular location is the cytoplasm. The catalysed reaction is tRNA(Pro) + L-proline + ATP = L-prolyl-tRNA(Pro) + AMP + diphosphate. Its function is as follows. Catalyzes the attachment of proline to tRNA(Pro) in a two-step reaction: proline is first activated by ATP to form Pro-AMP and then transferred to the acceptor end of tRNA(Pro). As ProRS can inadvertently accommodate and process non-cognate amino acids such as alanine and cysteine, to avoid such errors it has two additional distinct editing activities against alanine. One activity is designated as 'pretransfer' editing and involves the tRNA(Pro)-independent hydrolysis of activated Ala-AMP. The other activity is designated 'posttransfer' editing and involves deacylation of mischarged Ala-tRNA(Pro). The misacylated Cys-tRNA(Pro) is not edited by ProRS. In Shewanella frigidimarina (strain NCIMB 400), this protein is Proline--tRNA ligase.